We begin with the raw amino-acid sequence, 202 residues long: NADH-quinone oxidoreductase subunit C (202 aa).

Belongs to the complex I 30 kDa subunit family. As to quaternary structure, NDH-1 is composed of 14 different subunits. Subunits NuoB, C, D, E, F, and G constitute the peripheral sector of the complex.

The protein resides in the cell inner membrane. It catalyses the reaction a quinone + NADH + 5 H(+)(in) = a quinol + NAD(+) + 4 H(+)(out). Its function is as follows. NDH-1 shuttles electrons from NADH, via FMN and iron-sulfur (Fe-S) centers, to quinones in the respiratory chain. The immediate electron acceptor for the enzyme in this species is believed to be ubiquinone. Couples the redox reaction to proton translocation (for every two electrons transferred, four hydrogen ions are translocated across the cytoplasmic membrane), and thus conserves the redox energy in a proton gradient. In Paracidovorax citrulli (strain AAC00-1) (Acidovorax citrulli), this protein is NADH-quinone oxidoreductase subunit C.